The chain runs to 355 residues: Peptide chain release factor 1 (355 aa).

An N5-methylglutamine modification is found at Gln-233.

It belongs to the prokaryotic/mitochondrial release factor family. Methylated by PrmC. Methylation increases the termination efficiency of RF1.

The protein localises to the cytoplasm. Functionally, peptide chain release factor 1 directs the termination of translation in response to the peptide chain termination codons UAG and UAA. This is Peptide chain release factor 1 from Rickettsia typhi (strain ATCC VR-144 / Wilmington).